The primary structure comprises 387 residues: WD repeat-containing protein 89 (387 aa).

WD repeat units follow at residues 21 to 65 (KEPT…VLRE), 68 to 107 (GYPG…EKPV), 112 to 156 (GYPS…QDLS), 168 to 208 (THSD…EEDA), 214 to 254 (NSIS…TDEP), and 319 to 358 (GHAA…KTFT).

The sequence is that of WD repeat-containing protein 89 (WDR89) from Pongo abelii (Sumatran orangutan).